Reading from the N-terminus, the 214-residue chain is RNA pyrophosphohydrolase (214 aa).

One can recognise a Nudix hydrolase domain in the interval 6-149; it reads GFRPNVGIIL…KRDVYQLALT (144 aa). The Nudix box signature appears at 38-59; it reads GGIKYGETPMQAMYRELHEETG.

Belongs to the Nudix hydrolase family. RppH subfamily. The cofactor is a divalent metal cation.

Functionally, accelerates the degradation of transcripts by removing pyrophosphate from the 5'-end of triphosphorylated RNA, leading to a more labile monophosphorylated state that can stimulate subsequent ribonuclease cleavage. The protein is RNA pyrophosphohydrolase of Burkholderia orbicola (strain MC0-3).